We begin with the raw amino-acid sequence, 773 residues long: Phenylalanine--tRNA ligase beta subunit (773 aa).

Residues 39–150 (LKAPDKVVVG…GKLELGRPLN (112 aa)) enclose the tRNA-binding domain. Residues 391-467 (KELPIIPISI…RIIGIDNIAS (77 aa)) form the B5 domain. Residues aspartate 445, aspartate 451, glutamate 454, and glutamate 455 each coordinate Mg(2+). Residues 682–773 (SKFPAITRDL…TLKNLGLDLR (92 aa)) form the FDX-ACB domain.

The protein belongs to the phenylalanyl-tRNA synthetase beta subunit family. Type 1 subfamily. Tetramer of two alpha and two beta subunits. Mg(2+) is required as a cofactor.

The protein localises to the cytoplasm. The catalysed reaction is tRNA(Phe) + L-phenylalanine + ATP = L-phenylalanyl-tRNA(Phe) + AMP + diphosphate + H(+). This chain is Phenylalanine--tRNA ligase beta subunit (pheT), found in Campylobacter jejuni subsp. jejuni serotype O:2 (strain ATCC 700819 / NCTC 11168).